We begin with the raw amino-acid sequence, 506 residues long: COP9 signalosome complex subunit 2 (506 aa).

In terms of domain architecture, PCI spans 252–420 (SEENWEEAQS…GTVVVESASD (169 aa)). The segment covering 482 to 491 (SGHRFRRGGK) has biased composition (basic residues). The interval 482-506 (SGHRFRRGGKGSKAGGGLGMKTGLF) is disordered. A compositionally biased stretch (gly residues) spans 492–506 (GSKAGGGLGMKTGLF).

Belongs to the CSN2 family. Component of the COP9 signalosome (CSN) complex.

Its subcellular location is the cytoplasm. It is found in the nucleus. Its function is as follows. Component of the COP9 signalosome (CSN) complex that acts as an regulator of the ubiquitin (Ubl) conjugation pathway by mediating the deneddylation of the cullin subunit of SCF-type E3 ubiquitin-protein ligase complexes. The CSN complex seems to link protein degradation to sexual development. Required for fruit body formation. In Emericella nidulans (strain FGSC A4 / ATCC 38163 / CBS 112.46 / NRRL 194 / M139) (Aspergillus nidulans), this protein is COP9 signalosome complex subunit 2 (csnB).